A 415-amino-acid polypeptide reads, in one-letter code: Queuine tRNA-ribosyltransferase accessory subunit 2 (415 aa).

Zn(2+) contacts are provided by Cys351, Cys353, Cys356, and His382.

This sequence belongs to the queuine tRNA-ribosyltransferase family. QTRT2 subfamily. In terms of assembly, heterodimer of a catalytic subunit qtrt1 and an accessory subunit qtrt2. Requires Zn(2+) as cofactor.

The protein resides in the cytoplasm. The protein localises to the mitochondrion outer membrane. Non-catalytic subunit of the queuine tRNA-ribosyltransferase (TGT) that catalyzes the base-exchange of a guanine (G) residue with queuine (Q) at position 34 (anticodon wobble position) in tRNAs with GU(N) anticodons (tRNA-Asp, -Asn, -His and -Tyr), resulting in the hypermodified nucleoside queuosine (7-(((4,5-cis-dihydroxy-2-cyclopenten-1-yl)amino)methyl)-7-deazaguanosine). This chain is Queuine tRNA-ribosyltransferase accessory subunit 2, found in Xenopus laevis (African clawed frog).